The chain runs to 486 residues: Cardiolipin synthase A (486 aa).

2 consecutive transmembrane segments (helical) span residues T3 to V23 and M38 to V58. 2 consecutive PLD phosphodiesterase domains span residues M219–R246 and E399–S426. Catalysis depends on residues H224, K226, D231, H404, K406, and D411.

The protein belongs to the phospholipase D family. Cardiolipin synthase subfamily. ClsA sub-subfamily.

It is found in the cell inner membrane. It catalyses the reaction 2 a 1,2-diacyl-sn-glycero-3-phospho-(1'-sn-glycerol) = a cardiolipin + glycerol. Catalyzes the reversible phosphatidyl group transfer from one phosphatidylglycerol molecule to another to form cardiolipin (CL) (diphosphatidylglycerol) and glycerol. The sequence is that of Cardiolipin synthase A from Shigella boydii serotype 4 (strain Sb227).